A 592-amino-acid polypeptide reads, in one-letter code: MAPPVAERGLKSVVWQKIKATVFDDCKKEGEWKIMLLDEFTTKLLASCCKMTDLLEEGITVVENIYKNREPVRQMKALYFITPTSKSVDCFLHDFASKSENKYKAAYIYFTDFCPDNLFNKIKASCSKSIRRCKEINISFIPHESQVYTLDVPDAFYYCYSPDPGNAKGKDAIMETMADQIVTVCATLDENPGVRYKSKPLDNASKLAQLVEKKLEDYYKIDEKSLIKGKTHSQLLIIDRGFDPVSTVLHELTFQAMAYDLLPIENDTYKYKTDGKEKEAILEEEDDLWVRIRHRHIAVVLEEIPKLMKEISSTKKATEGKTSLSALTQLMKKMPHFRKQITKQVVHLNLAEDCMNKFKLNIEKLCKTEQDLALGTDAEGQKVKDSMRVLLPVLLNKNHDNCDKIRAILLYIFSINGTTEENLDRLIQNVKIENESDMIRNWSYLGVPIVPQSQQGKPLRKDRSAEETFQLSRWTPFIKDIMEDAIDNRLDSKEWPYCSQCPAVWNGSGAVSARQKPRANYLEDRKNGSKLIVFVIGGITYSEVRCAYEVSQAHKSCEVIIGSTHVLTPKKLLDDIKMLNKPKDKVSLIKDE.

Residues 1 to 255 (MAPPVAERGL…STVLHELTFQ (255 aa)) form a mediates interaction with DOC2B region.

It belongs to the STXBP/unc-18/SEC1 family. Interacts with DOC2B; the interaction is direct, occurs at the cell membrane, excludes interaction with STX4 and regulates glucose-stimulated insulin secretion. Interacts with STX4. Phosphorylated by PKC in platelets in response to thrombin stimulation; phosphorylation inhibits binding to STX4. Megakaryocytes and platelets.

The protein resides in the cytoplasm. It is found in the cytosol. It localises to the cell membrane. Functionally, together with STX4 and VAMP2, may play a role in insulin-dependent movement of GLUT4 and in docking/fusion of intracellular GLUT4-containing vesicles with the cell surface in adipocytes. The polypeptide is Syntaxin-binding protein 3 (STXBP3) (Homo sapiens (Human)).